Reading from the N-terminus, the 92-residue chain is Bombyxin A-3 (92 aa).

The first 19 residues, 1–19, serve as a signal peptide directing secretion; it reads MKILLAIALMLSTVMWVST. Position 20 is a pyrrolidone carboxylic acid (Gln-20). Disulfide bonds link Cys-29–Cys-79, Cys-41–Cys-92, and Cys-78–Cys-83. A propeptide spans 50–70 (c peptide like); the sequence is SDAQYVSYGSAWLMPYSEGRG.

It belongs to the insulin family. In terms of assembly, heterodimer of a B chain and an A chain linked by two disulfide bonds.

It localises to the secreted. In terms of biological role, brain peptide responsible for activation of prothoracic glands to produce ecdysone in insects. This is Bombyxin A-3 (BBXA3) from Bombyx mori (Silk moth).